Here is a 349-residue protein sequence, read N- to C-terminus: Protein POOR HOMOLOGOUS SYNAPSIS 1 (349 aa).

Its subcellular location is the cytoplasm. Required for accurate chromosome segregation in meiosis. Required for pairing to occur between homologous chromosomes. Acts in early recombination steps and ensures pairing fidelity and proper repair of meiotic DNA double-strand-breaks. Regulates recombination and pairing of homologous chromosomes during meiotic prophase by controlling transport of RAD50 from cytoplasm to the nucleus. May affect pairing of the gene-rich fraction of the genome rather than preventing pairing between repetitive DNA elements. This Arabidopsis thaliana (Mouse-ear cress) protein is Protein POOR HOMOLOGOUS SYNAPSIS 1.